A 400-amino-acid chain; its full sequence is MSQNLILILNCGSSSLKFAILDPINGDEKLSGLAESFYLDDARIKWKFNGEKGNADLDAGAAHTEALNFIVSNILTDELKQSIGAIGHRIVHGGEKFTSSVVITDEVVKGIEEVIQFAPLHNPAHLIGIQEAFRIFPELKDRNVAVFDTAFHTTMPEQAYLYALPYSLYKDHGVRRYGAHGTSHYFVSREAARRLNVAEDKVNVITCHLGNGGSVSAIRHGECIDTSMGLTPLEGLVMGTRSGDIDPAIIFYMHDTLGMSVEEINNTLTKKSGLLGLTEVTSDCRYAEDNYETDDAARRAMEVYCYRLAKYIGSYMAVIGERLDAIVFTGGIGENSAHVREITLNHLKLFGYQVDDARNLAARFGNEGVITAEGSPLAMVIATNEELVIAQDTARLTITK.

Asn-10 contributes to the Mg(2+) binding site. Residue Lys-17 coordinates ATP. Position 89 (Arg-89) interacts with substrate. The Proton donor/acceptor role is filled by Asp-148. ATP contacts are provided by residues 208–212 (HLGNG), 283–285 (DCR), and 331–335 (GIGEN). Glu-385 lines the Mg(2+) pocket.

This sequence belongs to the acetokinase family. In terms of assembly, homodimer. Mg(2+) serves as cofactor. Requires Mn(2+) as cofactor.

The protein resides in the cytoplasm. The catalysed reaction is acetate + ATP = acetyl phosphate + ADP. It participates in metabolic intermediate biosynthesis; acetyl-CoA biosynthesis; acetyl-CoA from acetate: step 1/2. Catalyzes the formation of acetyl phosphate from acetate and ATP. Can also catalyze the reverse reaction. This chain is Acetate kinase, found in Haemophilus ducreyi (strain 35000HP / ATCC 700724).